Here is a 727-residue protein sequence, read N- to C-terminus: MPHIYKQPLGIFQGFVPTLTDAEVSFIAQRQLLTLPENGELPDDIEYEVDLKVTFANHRLKRAYIALQAWKKAVYSDPFNTTGNWHGPHVCGYTGVFCAPALDDPDVAVVAGVDLNGADIAGHLPAELGLMTDVAMFHLNSNRFCGIIPKSFEKLSLMHEFDVSNNRFVGPFPSVVLSWPAVKFIDVRYNDFEGQVPPELFKKDLDAIFLNNNRFTSTIPDSLGESSASVVTFAHNKFSGCIPRSIGNMKNLNEIIFKDNSLGGCFPSEIGKLANVNVFDASMNSFTGVLPPSFVGLTSMEEFDISGNKLTGFIPENICKLPKLVNLTYAYNYFNGQGDSCVPGSQKQIALDDTRNCLPDRPKQRSAKECAVVISRPVDCSKDKCAGGSSQATPSKSPSPVPTRPVHKPQPPKESPQPNDPYNQSPVKFRRSPPPPQQPHHHVVHSPPPASSPPTSPPVHSTPSPVHKPQPPKESPQPNDPYDQSPVKFRRSPPPPPVHSPPPPSPIHSPPPPPVYSPPPPPPVYSPPPPPPVYSPPPPPPVHSPPPPVHSPPPPVHSPPPPVHSPPPPVHSPPPPVHSPPPPVYSPPPPPVHSPPPPVHSPPPPVHSPPPPVYSPPPPPPVHSPPPPVFSPPPPVHSPPPPVYSPPPPVYSPPPPPVKSPPPPPVYSPPLLPPKMSSPPTQTPVNSPPPRTPSQTVEAPPPSEEFIIPPFIGHQYASPPPPMFQGY.

The signal sequence occupies residues 1-22 (MPHIYKQPLGIFQGFVPTLTDA). Residues 19-43 (LTDAEVSFIAQRQLLTLPENGELPD) form an LRR 1 repeat. The N-linked (GlcNAc...) asparagine glycan is linked to N80. LRR repeat units follow at residues 107–131 (VAVVAGVDLNGADIAGHLPAELGLM), 132–154 (TDVAMFHLNSNRFCGIIPKSFEK), 156–179 (SLMHEFDVSNNRFVGPFPSVVLSW), 180–202 (PAVKFIDVRYNDFEGQVPPELFK), 203–226 (KDLDAIFLNNNRFTSTIPDSLGES), 228–249 (ASVVTFAHNKFSGCIPRSIGNM), 250–273 (KNLNEIIFKDNSLGGCFPSEIGKL), 275–296 (NVNVFDASMNSFTGVLPPSFVG), and 297–321 (LTSMEEFDISGNKLTGFIPENICKL). N326 carries an N-linked (GlcNAc...) asparagine glycan. Residues 381–727 (SKDKCAGGSS…SPPPPMFQGY (347 aa)) form a disordered region. 5 stretches are compositionally biased toward pro residues: residues 397-419 (SPSPVPTRPVHKPQPPKESPQPN), 446-457 (SPPPASSPPTSP), 466-479 (VHKPQPPKESPQPN), 492-677 (SPPP…PKMS), and 718-727 (SPPPPMFQGY). Residues 432–727 (SPPPPQQPHH…SPPPPMFQGY (296 aa)) are contains the Ser-Pro(4) repeats.

Hydroxylated on proline residues in the S-P-P-P-P repeat. Post-translationally, O-glycosylated on hydroxyprolines. In terms of tissue distribution, expressed in flowers, stamen, pollen, and pollinated carpels.

It localises to the secreted. The protein resides in the cell wall. Modulates cell morphogenesis by regulating cell wall formation and assembly, and/or growth polarization. The polypeptide is Pollen-specific leucine-rich repeat extensin-like protein 3 (PEX3) (Arabidopsis thaliana (Mouse-ear cress)).